Reading from the N-terminus, the 95-residue chain is uncharacterized protein (95 aa).

The helical transmembrane segment at 12–32 threads the bilayer; that stretch reads IASLVVSVVVLLIGLILWFFI.

The protein resides in the cell membrane. This is an uncharacterized protein from Escherichia coli O6:H1 (strain CFT073 / ATCC 700928 / UPEC).